Reading from the N-terminus, the 400-residue chain is 2'-5'-oligoadenylate synthase 1 (400 aa).

Residues 13–60 are interaction with dsRNA; it reads DKFIEDYLLPDTCFRMQINHAIDIICGFLKERCFRGSSYPVCVSKVVK. Ser-63 lines the ATP pocket. The Mg(2+) site is built by Asp-75, Asp-77, and Asp-148. The interval 200–210 is interaction with dsRNA; sequence QRPTKLKSLIR. Residues Arg-210, Lys-213, and Gln-229 each contribute to the ATP site. Cys-397 carries S-geranylgeranyl cysteine lipidation.

This sequence belongs to the 2-5A synthase family. Monomer. Homotetramer. Mg(2+) serves as cofactor. In terms of processing, prenylated at C-terminal. C-terminal prenylation is necessary to initiate a block to SARS-CoV-2 and is associated with protection from severe COVID-1. The prenylated form is targeted to perinuclear structures rich in viral dsRNA, whereas the non-prenylated form is diffusely localized and unable to initiate a detectable block to SARS-CoV-2 replication. C-terminal prenylation is also necessary to initiate a block to cardiovirus EMCV. Not prenylated at C-terminal. The non-prenylated form is diffusely localized and unable to initiate a detectable block to SARS-CoV-2 replication. As to expression, expressed in lungs.

The protein resides in the cytoplasm. The protein localises to the mitochondrion. It localises to the nucleus. It is found in the microsome. Its subcellular location is the endoplasmic reticulum. The protein resides in the secreted. The catalysed reaction is 3 ATP = 5'-triphosphoadenylyl-(2'-&gt;5')-adenylyl-(2'-&gt;5')-adenosine + 2 diphosphate. Its activity is regulated as follows. Produced as a latent enzyme which is activated by dsRNA generated during the course of viral infection. The dsRNA activator must be at least 15 nucleotides long, and no modification of the 2'-hydroxyl group is tolerated. ssRNA or dsDNA do not act as activators. Its function is as follows. Interferon-induced, dsRNA-activated antiviral enzyme which plays a critical role in cellular innate antiviral response. In addition, it may also play a role in other cellular processes such as apoptosis, cell growth, differentiation and gene regulation. Synthesizes higher oligomers of 2'-5'-oligoadenylates (2-5A) from ATP which then bind to the inactive monomeric form of ribonuclease L (RNase L) leading to its dimerization and subsequent activation. Activation of RNase L leads to degradation of cellular as well as viral RNA, resulting in the inhibition of protein synthesis, thus terminating viral replication. Can mediate the antiviral effect via the classical RNase L-dependent pathway or an alternative antiviral pathway independent of RNase L. The secreted form displays antiviral effect against vesicular stomatitis virus (VSV), herpes simplex virus type 2 (HSV-2), and encephalomyocarditis virus (EMCV) and stimulates the alternative antiviral pathway independent of RNase L. In terms of biological role, when prenylated at C-terminal, acts as a double-stranded RNA (dsRNA) sensor specifically targeted to membranous replicative organelles in SARS coronavirus-2/SARS-CoV-2 infected cells where it binds to dsRNA structures in the SARS-CoV-2 5'-UTR and initiates a potent block to SARS-CoV-2 replication. Recognizes short stretches of dsRNA and activates RNase L. The binding is remarkably specific, with two conserved stem loops in the SARS-CoV-2 5'- untranslated region (UTR) constituting the principal viral target. The same mechanism is necessary to initiate a block to cardiovirus EMCV. Not prenylated at C-terminal, is diffusely localized and unable to initiate a detectable block to SARS-CoV-2 replication. The polypeptide is 2'-5'-oligoadenylate synthase 1 (OAS1) (Homo sapiens (Human)).